The following is a 526-amino-acid chain: Peptide chain release factor 3 (526 aa).

The tr-type G domain occupies 9-277 (DKRRTFAIIS…GIVEWAPRPQ (269 aa)). Residues 18 to 25 (SHPDAGKT), 86 to 90 (DTPGH), and 140 to 143 (NKLD) contribute to the GTP site.

This sequence belongs to the TRAFAC class translation factor GTPase superfamily. Classic translation factor GTPase family. PrfC subfamily.

The protein localises to the cytoplasm. Functionally, increases the formation of ribosomal termination complexes and stimulates activities of RF-1 and RF-2. It binds guanine nucleotides and has strong preference for UGA stop codons. It may interact directly with the ribosome. The stimulation of RF-1 and RF-2 is significantly reduced by GTP and GDP, but not by GMP. The chain is Peptide chain release factor 3 from Shewanella loihica (strain ATCC BAA-1088 / PV-4).